The following is a 473-amino-acid chain: Lysophospholipid acyltransferase 5 (473 aa).

4 helical membrane-spanning segments follow: residues 20-40, 43-63, 66-86, and 88-108; these read LLIS…FFYN, AQHQ…FNCG, VIHP…MAGT, and ASIY…YWFH. Active-site residues include Asn-315 and His-351. The next 3 membrane-spanning stretches (helical) occupy residues 341-361, 396-416, and 431-451; these read VITL…FLLF, FIWI…FLMF, and LYFI…MVLL. Positions 470 to 473 match the Di-lysine motif motif; it reads KKEL.

Belongs to the membrane-bound acyltransferase family.

The protein resides in the endoplasmic reticulum membrane. The catalysed reaction is a 1-acyl-sn-glycero-3-phosphocholine + an acyl-CoA = a 1,2-diacyl-sn-glycero-3-phosphocholine + CoA. The enzyme catalyses a 1-acyl-sn-glycero-3-phospho-L-serine + an acyl-CoA = a 1,2-diacyl-sn-glycero-3-phospho-L-serine + CoA. It catalyses the reaction a 1-acyl-sn-glycero-3-phosphoethanolamine + an acyl-CoA = a 1,2-diacyl-sn-glycero-3-phosphoethanolamine + CoA. The protein operates within lipid metabolism; phospholipid metabolism. Its function is as follows. Probable acyltransferase which may mediate the conversion of lysophosphatidylcholine (1-acyl-sn-glycero-3-phosphocholine or LPC) into phosphatidylcholine (1,2-diacyl-sn-glycero-3-phosphocholine or PC) (LPCAT activity). May also catalyze the conversion of lysophosphatidylethanolamine (1-acyl-2-hydroxy-sn-glycero-3-phosphoethanolamine or LPE) into phosphatidylethanolamine (1,2-diacyl-sn-glycero-3-phosphoethanolamine or PE) (LPEAT activity), as well as the conversion of lysophosphatidylserine (1-acyl-2-hydroxy-sn-glycero-3-phospho-L-serine or LPS) into phosphatidylserine (1,2-diacyl-sn-glycero-3-phospho-L-serine or PS) (LPSAT activity). Required for incorporation of arachidonic acid into PC, PE, and PS. In Caenorhabditis elegans, this protein is Lysophospholipid acyltransferase 5 (mboa-6).